A 260-amino-acid polypeptide reads, in one-letter code: DNA repair protein RecO (260 aa).

It belongs to the RecO family.

In terms of biological role, involved in DNA repair and RecF pathway recombination. The polypeptide is DNA repair protein RecO (Levilactobacillus brevis (strain ATCC 367 / BCRC 12310 / CIP 105137 / JCM 1170 / LMG 11437 / NCIMB 947 / NCTC 947) (Lactobacillus brevis)).